Consider the following 1828-residue polypeptide: Proteasome activator complex subunit 4 (1828 aa).

6 HEAT repeats span residues Pro-462–Cys-506, Asn-985–Gly-1024, Tyr-1164–Arg-1202, Asp-1339–His-1377, Pro-1621–Phe-1659, and Glu-1665–Leu-1703. The bromodomain-like (BRDL) stretch occupies residues Ala-1635–Lys-1723.

It belongs to the BLM10 family. In terms of assembly, homodimer. Interacts with the 20S and 26S proteasomes.

It localises to the cytoplasm. The protein localises to the cytosol. It is found in the nucleus. The protein resides in the nucleus speckle. Functionally, associated component of the proteasome that specifically recognizes acetylated histones and promotes ATP- and ubiquitin-independent degradation of core histones during DNA damage response. Recognizes and binds acetylated histones via its bromodomain-like (BRDL) region and activates the proteasome by opening the gated channel for substrate entry. Binds to the core proteasome via its C-terminus, which occupies the same binding sites as the proteasomal ATPases, opening the closed structure of the proteasome via an active gating mechanism. involved in DNA damage response in somatic cells: binds to acetylated histones and promotes degradation of histones. In Xenopus laevis (African clawed frog), this protein is Proteasome activator complex subunit 4 (psme4).